The chain runs to 375 residues: Holliday junction branch migration complex subunit RuvB (375 aa).

The tract at residues Met-1–Pro-50 is disordered. A large ATPase domain (RuvB-L) region spans residues Glu-13 to Tyr-209. Residues Lys-19–Gln-28 show a composition bias toward polar residues. Basic and acidic residues predominate over residues Glu-40 to Arg-49. ATP-binding positions include Ile-48, Arg-49, Gly-90, Lys-93, Thr-94, Thr-95, Glu-156 to Phe-158, Arg-199, Tyr-209, and Arg-246. Position 94 (Thr-94) interacts with Mg(2+). The tract at residues Glu-210–Asn-280 is small ATPAse domain (RuvB-S). The segment at Pro-283–Thr-375 is head domain (RuvB-H). Arg-338 and Arg-343 together coordinate DNA.

This sequence belongs to the RuvB family. Homohexamer. Forms an RuvA(8)-RuvB(12)-Holliday junction (HJ) complex. HJ DNA is sandwiched between 2 RuvA tetramers; dsDNA enters through RuvA and exits via RuvB. An RuvB hexamer assembles on each DNA strand where it exits the tetramer. Each RuvB hexamer is contacted by two RuvA subunits (via domain III) on 2 adjacent RuvB subunits; this complex drives branch migration. In the full resolvosome a probable DNA-RuvA(4)-RuvB(12)-RuvC(2) complex forms which resolves the HJ.

The protein localises to the cytoplasm. The catalysed reaction is ATP + H2O = ADP + phosphate + H(+). The RuvA-RuvB-RuvC complex processes Holliday junction (HJ) DNA during genetic recombination and DNA repair, while the RuvA-RuvB complex plays an important role in the rescue of blocked DNA replication forks via replication fork reversal (RFR). RuvA specifically binds to HJ cruciform DNA, conferring on it an open structure. The RuvB hexamer acts as an ATP-dependent pump, pulling dsDNA into and through the RuvAB complex. RuvB forms 2 homohexamers on either side of HJ DNA bound by 1 or 2 RuvA tetramers; 4 subunits per hexamer contact DNA at a time. Coordinated motions by a converter formed by DNA-disengaged RuvB subunits stimulates ATP hydrolysis and nucleotide exchange. Immobilization of the converter enables RuvB to convert the ATP-contained energy into a lever motion, pulling 2 nucleotides of DNA out of the RuvA tetramer per ATP hydrolyzed, thus driving DNA branch migration. The RuvB motors rotate together with the DNA substrate, which together with the progressing nucleotide cycle form the mechanistic basis for DNA recombination by continuous HJ branch migration. Branch migration allows RuvC to scan DNA until it finds its consensus sequence, where it cleaves and resolves cruciform DNA. The polypeptide is Holliday junction branch migration complex subunit RuvB (Synechococcus elongatus (strain ATCC 33912 / PCC 7942 / FACHB-805) (Anacystis nidulans R2)).